We begin with the raw amino-acid sequence, 356 residues long: Phospho-N-acetylmuramoyl-pentapeptide-transferase (356 aa).

A run of 10 helical transmembrane segments spans residues 3-23, 51-71, 80-100, 114-134, 152-172, 185-205, 227-247, 254-274, 279-299, and 333-353; these read QILF…PLLI, TMGG…AKVI, GLLV…DDYI, AKMA…LQFP, FGWS…ILAM, LATG…LWQF, PLDL…FLWW, IFMG…LAIL, FLLA…VIQV, and FWII…AGWA.

It belongs to the glycosyltransferase 4 family. MraY subfamily. Requires Mg(2+) as cofactor.

Its subcellular location is the cell membrane. The enzyme catalyses UDP-N-acetyl-alpha-D-muramoyl-L-alanyl-gamma-D-glutamyl-meso-2,6-diaminopimeloyl-D-alanyl-D-alanine + di-trans,octa-cis-undecaprenyl phosphate = di-trans,octa-cis-undecaprenyl diphospho-N-acetyl-alpha-D-muramoyl-L-alanyl-D-glutamyl-meso-2,6-diaminopimeloyl-D-alanyl-D-alanine + UMP. The protein operates within cell wall biogenesis; peptidoglycan biosynthesis. Catalyzes the initial step of the lipid cycle reactions in the biosynthesis of the cell wall peptidoglycan: transfers peptidoglycan precursor phospho-MurNAc-pentapeptide from UDP-MurNAc-pentapeptide onto the lipid carrier undecaprenyl phosphate, yielding undecaprenyl-pyrophosphoryl-MurNAc-pentapeptide, known as lipid I. This chain is Phospho-N-acetylmuramoyl-pentapeptide-transferase, found in Streptomyces griseus subsp. griseus (strain JCM 4626 / CBS 651.72 / NBRC 13350 / KCC S-0626 / ISP 5235).